The following is a 575-amino-acid chain: Dihydroxy-acid dehydratase (575 aa).

The tract at residues 1–25 (MPTTDSARAADIKQPDIKPRSRDVT) is disordered. Residues 8 to 25 (RAADIKQPDIKPRSRDVT) show a composition bias toward basic and acidic residues. Cys-64 contacts [2Fe-2S] cluster. Asp-96 provides a ligand contact to Mg(2+). Residue Cys-137 coordinates [2Fe-2S] cluster. Mg(2+) is bound by residues Asp-138 and Lys-139. The residue at position 139 (Lys-139) is an N6-carboxylysine. Position 214 (Cys-214) interacts with [2Fe-2S] cluster. Residue Glu-465 participates in Mg(2+) binding. The Proton acceptor role is filled by Ser-491.

It belongs to the IlvD/Edd family. As to quaternary structure, homodimer. The cofactor is [2Fe-2S] cluster. Requires Mg(2+) as cofactor.

It carries out the reaction (2R)-2,3-dihydroxy-3-methylbutanoate = 3-methyl-2-oxobutanoate + H2O. It catalyses the reaction (2R,3R)-2,3-dihydroxy-3-methylpentanoate = (S)-3-methyl-2-oxopentanoate + H2O. The protein operates within amino-acid biosynthesis; L-isoleucine biosynthesis; L-isoleucine from 2-oxobutanoate: step 3/4. Its pathway is amino-acid biosynthesis; L-valine biosynthesis; L-valine from pyruvate: step 3/4. Functions in the biosynthesis of branched-chain amino acids. Catalyzes the dehydration of (2R,3R)-2,3-dihydroxy-3-methylpentanoate (2,3-dihydroxy-3-methylvalerate) into 2-oxo-3-methylpentanoate (2-oxo-3-methylvalerate) and of (2R)-2,3-dihydroxy-3-methylbutanoate (2,3-dihydroxyisovalerate) into 2-oxo-3-methylbutanoate (2-oxoisovalerate), the penultimate precursor to L-isoleucine and L-valine, respectively. This is Dihydroxy-acid dehydratase from Mycobacterium avium (strain 104).